Here is a 553-residue protein sequence, read N- to C-terminus: MAAKEIRFSDDARQRMMKGVNTLANAVKATLGPRGRNAVLDKSFGAPTVTKDGVSVAKEIELEDKFENMGAQMLKEVSSQTSDIAGDGTTTATVLAQAILREGMKAVAAGMNPMDLKRGIDKGVSAATKYLADELSKPCETDTSIAQVGSISANSDESVGRIIADAMQKVGKEGVITVEEGSGLENELDVVEGMQFDRGYLSPYFINNQQSMKAELEDAFILLHDKKISNIRDLLPLLENVAKANKPLLIISEDIEGEALATLVVNSIRGIVKVAAVKAPGFGDRRKAMLQDIAVLTGGTVISEEVGLSLEKATLDDLGQAKKVDVSKEETTIVGGAGRHDDIMARVEQIRAQIEESTSEYDKEKLQERVAKLAGGVAVIKVGATSEIEMKEKKARVEDALHATRAAVEEGIVPGGGTALLRAQASLDGLEYANHDQEVGINIVRRAMEEPLRQIVYNAGGDGAVVVNEVRNGEGNYGYNAQSGEYGDLVEMGILDPTKVTRTALQNAASVAALMITTEVMVADLPKDDDAGAGGGMGDMGGMGGMGGMGGMM.

ATP-binding positions include 30-33 (TLGP), Lys-51, 87-91 (DGTTT), Gly-416, and Asp-496.

This sequence belongs to the chaperonin (HSP60) family. In terms of assembly, forms a cylinder of 14 subunits composed of two heptameric rings stacked back-to-back. Interacts with the co-chaperonin GroES.

It is found in the cytoplasm. It catalyses the reaction ATP + H2O + a folded polypeptide = ADP + phosphate + an unfolded polypeptide.. Together with its co-chaperonin GroES, plays an essential role in assisting protein folding. The GroEL-GroES system forms a nano-cage that allows encapsulation of the non-native substrate proteins and provides a physical environment optimized to promote and accelerate protein folding. The polypeptide is Chaperonin GroEL (Alkalilimnicola ehrlichii (strain ATCC BAA-1101 / DSM 17681 / MLHE-1)).